A 930-amino-acid chain; its full sequence is Alanine--tRNA ligase (930 aa).

Zn(2+)-binding residues include histidine 595, histidine 599, cysteine 700, and histidine 704.

It belongs to the class-II aminoacyl-tRNA synthetase family. The cofactor is Zn(2+).

The protein resides in the cytoplasm. It catalyses the reaction tRNA(Ala) + L-alanine + ATP = L-alanyl-tRNA(Ala) + AMP + diphosphate. Functionally, catalyzes the attachment of alanine to tRNA(Ala) in a two-step reaction: alanine is first activated by ATP to form Ala-AMP and then transferred to the acceptor end of tRNA(Ala). Also edits incorrectly charged Ser-tRNA(Ala) and Gly-tRNA(Ala) via its editing domain. The chain is Alanine--tRNA ligase from Malacoplasma penetrans (strain HF-2) (Mycoplasma penetrans).